We begin with the raw amino-acid sequence, 270 residues long: 4-diphosphocytidyl-2-C-methyl-D-erythritol kinase (270 aa).

Lys-8 is a catalytic residue. Position 90-100 (90-100) interacts with ATP; that stretch reads PIGAGLGGGSS. Asp-132 is a catalytic residue.

This sequence belongs to the GHMP kinase family. IspE subfamily.

It carries out the reaction 4-CDP-2-C-methyl-D-erythritol + ATP = 4-CDP-2-C-methyl-D-erythritol 2-phosphate + ADP + H(+). It participates in isoprenoid biosynthesis; isopentenyl diphosphate biosynthesis via DXP pathway; isopentenyl diphosphate from 1-deoxy-D-xylulose 5-phosphate: step 3/6. In terms of biological role, catalyzes the phosphorylation of the position 2 hydroxy group of 4-diphosphocytidyl-2C-methyl-D-erythritol. The protein is 4-diphosphocytidyl-2-C-methyl-D-erythritol kinase of Cytophaga hutchinsonii (strain ATCC 33406 / DSM 1761 / CIP 103989 / NBRC 15051 / NCIMB 9469 / D465).